The primary structure comprises 460 residues: Cation efflux system protein CusC (460 aa).

The N-terminal stretch at 1–17 (MSPCKLLPFCVALALTG) is a signal peptide. A lipid anchor (N-palmitoyl cysteine) is attached at Cys18. Cys18 carries S-diacylglycerol cysteine lipidation.

Belongs to the outer membrane factor (OMF) (TC 1.B.17) family. As to quaternary structure, homotrimer. Component of the cus efflux system composed of CusA, CusB, CusC and CusF.

The protein localises to the cell outer membrane. Functionally, forms pores that allow passive diffusion of cations across the outer membrane. Part of a cation efflux system that mediates resistance to copper and silver. This chain is Cation efflux system protein CusC (cusC), found in Escherichia coli O6:H1 (strain CFT073 / ATCC 700928 / UPEC).